A 564-amino-acid polypeptide reads, in one-letter code: Arginine--tRNA ligase (564 aa).

The short motif at 136 to 146 (ANPTGPLHMGN) is the 'HIGH' region element.

This sequence belongs to the class-I aminoacyl-tRNA synthetase family. As to quaternary structure, monomer.

Its subcellular location is the cytoplasm. It catalyses the reaction tRNA(Arg) + L-arginine + ATP = L-arginyl-tRNA(Arg) + AMP + diphosphate. This is Arginine--tRNA ligase from Ruminiclostridium cellulolyticum (strain ATCC 35319 / DSM 5812 / JCM 6584 / H10) (Clostridium cellulolyticum).